A 184-amino-acid chain; its full sequence is Mitochondrial import inner membrane translocase subunit Tim22 (184 aa).

Disulfide bonds link Cys59-Cys131 and Cys150-Cys169. 3 helical membrane passes run 64–84 (ALAC…TAGI), 115–133 (YAKN…ECLV), and 160–180 (AGLK…AVID).

Belongs to the Tim17/Tim22/Tim23 family. As to quaternary structure, core component of the TIM22 complex.

It is found in the mitochondrion inner membrane. Essential core component of the TIM22 complex, a complex that mediates the import and insertion of multi-pass transmembrane proteins into the mitochondrial inner membrane. In the TIM22 complex, it constitutes the voltage-activated and signal-gated channel. Forms a twin-pore translocase that uses the membrane potential as external driving force in 2 voltage-dependent steps. The sequence is that of Mitochondrial import inner membrane translocase subunit Tim22 (timm22) from Xenopus laevis (African clawed frog).